The following is a 254-amino-acid chain: Type III pantothenate kinase (254 aa).

Position 7 to 14 (7 to 14 (DIGNTRLK)) interacts with ATP. Substrate is bound by residues Y97 and 104-107 (GSDR). The active-site Proton acceptor is the D106. T134 is an ATP binding site. T184 contributes to the substrate binding site.

Belongs to the type III pantothenate kinase family. As to quaternary structure, homodimer. NH4(+) is required as a cofactor. K(+) serves as cofactor.

The protein localises to the cytoplasm. The catalysed reaction is (R)-pantothenate + ATP = (R)-4'-phosphopantothenate + ADP + H(+). Its pathway is cofactor biosynthesis; coenzyme A biosynthesis; CoA from (R)-pantothenate: step 1/5. Functionally, catalyzes the phosphorylation of pantothenate (Pan), the first step in CoA biosynthesis. The polypeptide is Type III pantothenate kinase (Methylibium petroleiphilum (strain ATCC BAA-1232 / LMG 22953 / PM1)).